Here is a 715-residue protein sequence, read N- to C-terminus: Scinderin (715 aa).

Residues 1-363 form an actin-severing region; it reads MARELYHEEF…DGFGKVYVTE (363 aa). One copy of the Gelsolin-like 1 repeat lies at 27-76; the sequence is LELVPVPQSAHGDFYVGDAYLVLHTAKTSRGFTYHLHFWLGKECSQDEST. Y102 bears the Phosphotyrosine mark. A 1,2-diacyl-sn-glycero-3-phospho-(1D-myo-inositol-4,5-bisphosphate)-binding positions include 112-119 and 138-146; these read KGGLKYKA and RLLHVKGRR. 4 Gelsolin-like repeats span residues 148-188, 265-307, 398-451, and 523-564; these read VRAT…YERL, VVAE…QERK, VEIW…DELT, and TRIV…EEEK. The interval 364–715 is ca(2+)-dependent actin binding; that stretch reads KVAQIKQIPF…WFLGWDSSKW (352 aa). 3 residues coordinate Ca(2+): N538, D539, and E562. Y599 carries the phosphotyrosine modification. Residues 626 to 668 form a Gelsolin-like 6 repeat; the sequence is FVIEEIPGEFTQDDLAEDDVMLLDAWEQIFIWIGKDANEVEKK. Residues D643, D644, and E666 each contribute to the Ca(2+) site.

Belongs to the villin/gelsolin family. In terms of tissue distribution, expressed in megakaryocytes.

The protein resides in the cytoplasm. It localises to the cytoskeleton. Its subcellular location is the cell projection. The protein localises to the podosome. Ca(2+)-dependent actin filament-severing protein that has a regulatory function in exocytosis by affecting the organization of the microfilament network underneath the plasma membrane. Severing activity is inhibited by phosphatidylinositol 4,5-bis-phosphate (PIP2). In vitro, also has barbed end capping and nucleating activities in the presence of Ca(2+). Required for megakaryocyte differentiation, maturation, polyploidization and apoptosis with the release of platelet-like particles. Plays a role in osteoclastogenesis (OCG) and actin cytoskeletal organization in osteoclasts. Regulates chondrocyte proliferation and differentiation. Inhibits cell proliferation and tumorigenesis. Signaling is mediated by MAPK, p38 and JNK pathways. The polypeptide is Scinderin (Homo sapiens (Human)).